The sequence spans 131 residues: Small ribosomal subunit protein uS8 (131 aa).

The protein belongs to the universal ribosomal protein uS8 family. In terms of assembly, part of the 30S ribosomal subunit. Contacts proteins S5 and S12.

One of the primary rRNA binding proteins, it binds directly to 16S rRNA central domain where it helps coordinate assembly of the platform of the 30S subunit. The polypeptide is Small ribosomal subunit protein uS8 (Alkalilimnicola ehrlichii (strain ATCC BAA-1101 / DSM 17681 / MLHE-1)).